A 294-amino-acid polypeptide reads, in one-letter code: Large ribosomal subunit protein uL2 (294 aa).

2 disordered regions span residues 1–37 (MGIR…RPEK) and 228–294 (GSVM…RAAQ). The span at 23 to 37 (ELSRDENGKRPRPEK) shows a compositional bias: basic and acidic residues. A compositionally biased stretch (basic residues) spans 264–285 (KTRKRNKPSNKFIVRGRRRGGR).

Belongs to the universal ribosomal protein uL2 family. Part of the 50S ribosomal subunit. Forms a bridge to the 30S subunit in the 70S ribosome.

One of the primary rRNA binding proteins. Required for association of the 30S and 50S subunits to form the 70S ribosome, for tRNA binding and peptide bond formation. It has been suggested to have peptidyltransferase activity; this is somewhat controversial. Makes several contacts with the 16S rRNA in the 70S ribosome. The polypeptide is Large ribosomal subunit protein uL2 (Synechococcus sp. (strain JA-2-3B'a(2-13)) (Cyanobacteria bacterium Yellowstone B-Prime)).